Reading from the N-terminus, the 699-residue chain is LMBR1 domain-containing protein 2 homolog (699 aa).

At 1 to 3 (MAY) the chain is on the extracellular side. The helical transmembrane segment at 4 to 26 (LLTFGIIAALCLASISLYRYGNI) threads the bilayer. The Cytoplasmic portion of the chain corresponds to 27 to 30 (PRQH). Residues 31-51 (ILVTLSVLTAWCFSFLIVFTI) traverse the membrane as a helical segment. The Extracellular segment spans residues 52–106 (PLDVTSTLYRQCLAEHKLALDAAGNASTTANITPPPECQEPWGMVPESVFPNLWR). A glycan (N-linked (GlcNAc...) asparagine) is linked at Asn-76. A helical transmembrane segment spans residues 107-127 (IIYWSSQFLTWLIMPLMQSYL). Topologically, residues 128–144 (KAGDFTIKGKLKSALIE) are cytoplasmic. The chain crosses the membrane as a helical span at residues 145 to 165 (NAIYYGSYLFICGVLLIYIAV). The Extracellular portion of the chain corresponds to 166–181 (KGVPLDWQKLKAIASS). The chain crosses the membrane as a helical span at residues 182–202 (ASNTWGLFLLILLLGYALVEV). At 203 to 381 (PRSLWNNAKP…ECLLKAPFLK (179 aa)) the chain is on the cytoplasmic side. Residues 382 to 402 (TLCVVTATMSAMVVWSEVTFF) form a helical membrane-spanning segment. At 403–426 (SRDPVLSIFANVIYLAKESYDFFT) the chain is on the extracellular side. A helical membrane pass occupies residues 427–447 (IEVFSMMVLCYFFYCTYSTIL). Residues 448 to 467 (RIRFLNLYYLAPHHQTNEHS) are Cytoplasmic-facing. A helical transmembrane segment spans residues 468-488 (LIFSGMLLCRLTPPMCLNFLG). Residues 489 to 514 (LIHMDSHIIPERMMETYYTRIMGHMD) lie on the Extracellular side of the membrane. A helical transmembrane segment spans residues 515 to 535 (VIGIISNGFNIYFPMCMLAFC). Residues 536–699 (LSTWFSLGSR…PPPRGLFDDV (164 aa)) are Cytoplasmic-facing. A coiled-coil region spans residues 564 to 592 (ELVQEGKDLIAREKRRRQRAEEAMARRRD). Residues 669–699 (FRGTSELDPDYEAENERRIVGPPPRGLFDDV) form a disordered region.

It belongs to the LIMR family.

It localises to the membrane. This is LMBR1 domain-containing protein 2 homolog from Drosophila pseudoobscura pseudoobscura (Fruit fly).